Consider the following 532-residue polypeptide: Putative sodium-dependent excitatory amino acid transporter glt-3 (532 aa).

The Cytoplasmic portion of the chain corresponds to Met1–Lys5. Transmembrane regions (helical) follow at residues Asp6–Ile26, Phe46–Leu66, and Ile83–Ile103. The Extracellular portion of the chain corresponds to His104–Thr181. Residues Asn164 and Asn169 are each glycosylated (N-linked (GlcNAc...) asparagine). Helical transmembrane passes span Tyr182 to Leu202, Ile222 to Val242, Val264 to Leu284, Ala352 to Val372, and Ile383 to Val402.

This sequence belongs to the dicarboxylate/amino acid:cation symporter (DAACS) (TC 2.A.23) family.

Its subcellular location is the membrane. The chain is Putative sodium-dependent excitatory amino acid transporter glt-3 (glt-3) from Caenorhabditis elegans.